A 359-amino-acid polypeptide reads, in one-letter code: sn-1 linoleoyl-lipid 6-desaturase (359 aa).

A run of 2 helical transmembrane segments spans residues 45–65 (LIIVLWLFSAWAFVLFAPVIF) and 69–89 (LLGCMVLAIALAAFSFNVGHD). Positions 88 to 92 (HDANH) match the Histidine box-1 motif. The Histidine box-2 motif lies at 123-128 (HNYLHH). A run of 3 helical transmembrane segments spans residues 165 to 185 (IWGLYLFIPFYWFLYDVYLVL), 206 to 226 (LLGIKLLWLGYVFGLPLALGF), and 231 to 251 (VLIGASVTYMTYGIVVCTIFM). The Histidine box-3 motif lies at 306-310 (HHLFP).

The protein belongs to the fatty acid desaturase type 2 family. Fe(2+) serves as cofactor.

It is found in the membrane. It carries out the reaction a 1-[(9Z,12Z)-octadecdienoyl]-2-acyl-glycerolipid + 2 reduced [2Fe-2S]-[ferredoxin] + O2 + 2 H(+) = a 1-[(6Z,9Z,12Z)-octadectrienoyl]-2-acyl-glycerolipid + 2 oxidized [2Fe-2S]-[ferredoxin] + 2 H2O. The protein operates within lipid metabolism; polyunsaturated fatty acid biosynthesis. In terms of biological role, desaturase involved in fatty acid biosynthesis. Introduces a double bond at carbon 6 of linoleoyl group (18:2) attached to the sn-1 position of the glycerol moiety of membrane glycerolipids, leading to the formation of gamma-linolenic acid (GLA). The polypeptide is sn-1 linoleoyl-lipid 6-desaturase (Synechocystis sp. (strain ATCC 27184 / PCC 6803 / Kazusa)).